The sequence spans 282 residues: tRNA uridine(34) hydroxylase (282 aa).

Positions 128–222 (EGRPVVMLDT…YFEEVGGSHY (95 aa)) constitute a Rhodanese domain. The active-site Cysteine persulfide intermediate is Cys-182.

Belongs to the TrhO family.

The enzyme catalyses uridine(34) in tRNA + AH2 + O2 = 5-hydroxyuridine(34) in tRNA + A + H2O. Catalyzes oxygen-dependent 5-hydroxyuridine (ho5U) modification at position 34 in tRNAs. This is tRNA uridine(34) hydroxylase from Cupriavidus taiwanensis (strain DSM 17343 / BCRC 17206 / CCUG 44338 / CIP 107171 / LMG 19424 / R1) (Ralstonia taiwanensis (strain LMG 19424)).